The primary structure comprises 360 residues: Phospho-N-acetylmuramoyl-pentapeptide-transferase (360 aa).

10 consecutive transmembrane segments (helical) span residues 25-45 (RGIL…PWMI), 73-93 (TMGG…WADL), 97-117 (YVWV…VDDY), 135-155 (FWQS…APSA), 170-190 (IPLG…SSNA), 199-219 (GLAI…CYLS), 236-256 (AGEL…FLWF), 263-283 (VFMG…MAVI), 288-308 (IVLF…VIQV), and 338-358 (VIVR…ATLK).

It belongs to the glycosyltransferase 4 family. MraY subfamily. Requires Mg(2+) as cofactor.

It localises to the cell inner membrane. It carries out the reaction UDP-N-acetyl-alpha-D-muramoyl-L-alanyl-gamma-D-glutamyl-meso-2,6-diaminopimeloyl-D-alanyl-D-alanine + di-trans,octa-cis-undecaprenyl phosphate = di-trans,octa-cis-undecaprenyl diphospho-N-acetyl-alpha-D-muramoyl-L-alanyl-D-glutamyl-meso-2,6-diaminopimeloyl-D-alanyl-D-alanine + UMP. It participates in cell wall biogenesis; peptidoglycan biosynthesis. Its function is as follows. Catalyzes the initial step of the lipid cycle reactions in the biosynthesis of the cell wall peptidoglycan: transfers peptidoglycan precursor phospho-MurNAc-pentapeptide from UDP-MurNAc-pentapeptide onto the lipid carrier undecaprenyl phosphate, yielding undecaprenyl-pyrophosphoryl-MurNAc-pentapeptide, known as lipid I. This chain is Phospho-N-acetylmuramoyl-pentapeptide-transferase, found in Pseudomonas savastanoi pv. phaseolicola (strain 1448A / Race 6) (Pseudomonas syringae pv. phaseolicola (strain 1448A / Race 6)).